Consider the following 239-residue polypeptide: Large ribosomal subunit protein bL25 (239 aa).

Positions 217–239 (IKAEAHAAEGTQAEGSTEEGQQQ) are disordered. Positions 229–239 (AEGSTEEGQQQ) are enriched in polar residues.

The protein belongs to the bacterial ribosomal protein bL25 family. CTC subfamily. As to quaternary structure, part of the 50S ribosomal subunit; part of the 5S rRNA/L5/L18/L25 subcomplex. Contacts the 5S rRNA. Binds to the 5S rRNA independently of L5 and L18.

In terms of biological role, this is one of the proteins that binds to the 5S RNA in the ribosome where it forms part of the central protuberance. The sequence is that of Large ribosomal subunit protein bL25 from Deinococcus deserti (strain DSM 17065 / CIP 109153 / LMG 22923 / VCD115).